Reading from the N-terminus, the 596-residue chain is MSASNLLPMISSNPAQFAQASLAKAFAPRVAQGQQSVLSFEAMLSTNMLDRIGPLASREDLPPPDAESTLEDLQKDPLALLPPHMRAAIESMDQTPQSAVVIDDHYVAPAPIQSSRITWNGGSLTKPELQIVAVLNRHKDLCPLSWESLEAKANDPSTPPDLKAAIEALLQDPELFYAIGSQGDGRCGGKISAKDLSEFSKHHPQVAAFQESQAQSYAQNYIPSDSAENAQPSVMTENDALRELYRYSEYLPKNLSLADFKQIVDGEAKTGKCPPQVIAAAQYFVSHPEEWKQLYGGNIDKVHKEDFLQVASSSMSLTQAELDTLKTINSHQELFFGSGDLTRDKLASMADDKSLDPKVREAASQLLSDPLLFGLLNNAITGYKTHHGFFDFGGGHTVDSGNVSKEDFGRFYTNMTTANRTVQQPKFHVPETEAAQNAVADMKMGLADQPDIKSPKKNGGALMHVVDSVLRVGSKVLDWAATAVGVLSFIPGIGQVADLVSMTLACEAQAANLLRTAITGGNMKQALIEAGIGVAAQAVGLVSGPGVKLAIRNGLARKAIEEAATAGINLPLSMAQHYAEGYLNDLKARLAADHPA.

It localises to the secreted. The chain is Nodulation outer protein X (nopX) from Sinorhizobium fredii (strain NBRC 101917 / NGR234).